The chain runs to 132 residues: Small ribosomal subunit protein uS8c (132 aa).

It belongs to the universal ribosomal protein uS8 family. In terms of assembly, part of the 30S ribosomal subunit.

It is found in the plastid. The protein resides in the cyanelle. Functionally, one of the primary rRNA binding proteins, it binds directly to 16S rRNA central domain where it helps coordinate assembly of the platform of the 30S subunit. The sequence is that of Small ribosomal subunit protein uS8c (rps8) from Cyanophora paradoxa.